We begin with the raw amino-acid sequence, 130 residues long: Fluoride-specific ion channel FluC (130 aa).

A run of 4 helical transmembrane segments spans residues 3-23 (LVFLWAALGGAIGSSLRYFVG), 38-58 (LGTFSVNLIGCFIIGFMGHLA), 67-87 (FGIFFVTGVLGGFTTFSSYGL), and 102-122 (ISYVLGTNLLGLIGVAIGWFL). Positions 77 and 80 each coordinate Na(+).

This sequence belongs to the fluoride channel Fluc/FEX (TC 1.A.43) family.

Its subcellular location is the cell inner membrane. It catalyses the reaction fluoride(in) = fluoride(out). Na(+) is not transported, but it plays an essential structural role and its presence is essential for fluoride channel function. Its function is as follows. Fluoride-specific ion channel. Important for reducing fluoride concentration in the cell, thus reducing its toxicity. The sequence is that of Fluoride-specific ion channel FluC from Helicobacter pylori (strain J99 / ATCC 700824) (Campylobacter pylori J99).